Reading from the N-terminus, the 64-residue chain is Large ribosomal subunit protein bL33 (64 aa).

The protein belongs to the bacterial ribosomal protein bL33 family.

The chain is Large ribosomal subunit protein bL33 from Picosynechococcus sp. (strain ATCC 27264 / PCC 7002 / PR-6) (Agmenellum quadruplicatum).